Reading from the N-terminus, the 122-residue chain is Serum amyloid A-1 protein (122 aa).

Positions methionine 1–serine 18 are cleaved as a signal peptide. The interval glutamine 19–alanine 45 is important for amyloid formation. The tract at residues alanine 100–tyrosine 122 is disordered.

It belongs to the SAA family. In terms of assembly, homohexamer; dimer of trimers. Can form amyloid fibrils after partial proteolysis; the native, undenatured protein does not form amyloid fibrils (in vitro). Apolipoprotein of the HDL complex. Binds to heparin. As to expression, detected in liver, spleen and kidney.

The protein resides in the secreted. Its function is as follows. Major acute phase protein. The sequence is that of Serum amyloid A-1 protein (SAA1) from Mesocricetus auratus (Golden hamster).